A 924-amino-acid polypeptide reads, in one-letter code: Lon protease homolog 3, mitochondrial (924 aa).

Residues 1–63 (MMPKRFNTSG…PVQSLLLFRA (63 aa)) constitute a mitochondrion transit peptide. The Lon N-terminal domain occupies 112-325 (VIALPLPHKP…LTLELVKKQV (214 aa)). Residue 447–454 (GPPGVGKT) participates in ATP binding. Residues 738 to 922 (QTPVGVVMGL…EKIFDLAFNY (185 aa)) form the Lon proteolytic domain. Catalysis depends on residues S828 and K871.

It belongs to the peptidase S16 family. Homohexamer or homoheptamer. Organized in a ring with a central cavity.

Its subcellular location is the mitochondrion matrix. The enzyme catalyses Hydrolysis of proteins in presence of ATP.. Its function is as follows. ATP-dependent serine protease that mediates the selective degradation of misfolded, unassembled or oxidatively damaged polypeptides as well as certain short-lived regulatory proteins in the mitochondrial matrix. May also have a chaperone function in the assembly of inner membrane protein complexes. Participates in the regulation of mitochondrial gene expression and in the maintenance of the integrity of the mitochondrial genome. Binds to mitochondrial DNA in a site-specific manner. This is Lon protease homolog 3, mitochondrial (LON3) from Arabidopsis thaliana (Mouse-ear cress).